The chain runs to 212 residues: MGVTCVSQMPVAEGKSVQQTVELLTRKLEMLGAEKQGTFCVDCETYHTAASTLGSQGQTGKLMYVMHNSEYPLSCFALFENGPCLIADTNFDVLMVKLKGFFQSAKASKIETRGTRYQYCDFLVKVGTVTMGPSARGISVEVEYGPCVVASDCWSLLLEFLQSFLGSHTPGAPAVFGNRHDAVYGPADTMVQYMELFNKIRKQQQVPVAGIR.

This sequence belongs to the Mediator complex subunit 20 family. In terms of assembly, interacts with PPARG. Component of the Mediator complex, which is composed of MED1, MED4, MED6, MED7, MED8, MED9, MED10, MED11, MED12, MED13, MED13L, MED14, MED15, MED16, MED17, MED18, MED19, MED20, MED21, MED22, MED23, MED24, MED25, MED26, MED27, MED29, MED30, MED31, CCNC, CDK8 and CDC2L6/CDK11. The MED12, MED13, CCNC and CDK8 subunits form a distinct module termed the CDK8 module. Mediator containing the CDK8 module is less active than Mediator lacking this module in supporting transcriptional activation. Individual preparations of the Mediator complex lacking one or more distinct subunits have been variously termed ARC, CRSP, DRIP, PC2, SMCC and TRAP.

The protein resides in the nucleus. In terms of biological role, component of the Mediator complex, a coactivator involved in the regulated transcription of nearly all RNA polymerase II-dependent genes. Mediator functions as a bridge to convey information from gene-specific regulatory proteins to the basal RNA polymerase II transcription machinery. Mediator is recruited to promoters by direct interactions with regulatory proteins and serves as a scaffold for the assembly of a functional preinitiation complex with RNA polymerase II and the general transcription factors. The sequence is that of Mediator of RNA polymerase II transcription subunit 20 (MED20) from Homo sapiens (Human).